A 327-amino-acid chain; its full sequence is Cysteine synthase (327 aa).

K65 is subject to N6-(pyridoxal phosphate)lysine. Residues N95, 200–204 (GTGGT), and S282 contribute to the pyridoxal 5'-phosphate site.

The protein belongs to the cysteine synthase/cystathionine beta-synthase family. Pyridoxal 5'-phosphate is required as a cofactor.

It catalyses the reaction O-acetyl-L-serine + hydrogen sulfide = L-cysteine + acetate. It participates in amino-acid biosynthesis; L-cysteine biosynthesis; L-cysteine from L-serine: step 2/2. The polypeptide is Cysteine synthase (cysM) (Aquifex aeolicus (strain VF5)).